We begin with the raw amino-acid sequence, 120 residues long: Ribosome-binding factor A (120 aa).

Belongs to the RbfA family. As to quaternary structure, monomer. Binds 30S ribosomal subunits, but not 50S ribosomal subunits or 70S ribosomes.

The protein resides in the cytoplasm. One of several proteins that assist in the late maturation steps of the functional core of the 30S ribosomal subunit. Associates with free 30S ribosomal subunits (but not with 30S subunits that are part of 70S ribosomes or polysomes). Required for efficient processing of 16S rRNA. May interact with the 5'-terminal helix region of 16S rRNA. In Campylobacter jejuni subsp. jejuni serotype O:6 (strain 81116 / NCTC 11828), this protein is Ribosome-binding factor A.